The chain runs to 175 residues: Regenerating islet-derived protein 3-alpha (175 aa).

The first 26 residues, 1–26 (MLPPMALPSVSWMLLSCLMLLSQVQG), serve as a signal peptide directing secretion. The propeptide occupies 27 to 37 (EEPQRELPSAR). Cystine bridges form between Cys40–Cys51, Cys68–Cys171, and Cys146–Cys163. A C-type lectin domain is found at 47 to 172 (YGSHCYALFL…CNVRLPYVCK (126 aa)). Residues His50 and His107 each coordinate Zn(2+). The segment at 103 to 118 (WIGLHDPTQGTEPNGE) is sufficient to activate EXTL3. Positions 114–116 (EPN) match the EPN motif. Glu121 and His145 together coordinate Zn(2+).

Forms a hexameric membrane-permeabilizing oligomeric pore on membrane phospholipids. The hexamer is formed by three dimers related by helical symmetry. Forms filaments, filamentation traps pore complexes and limits damage to host cells. Interacts with EXTL3. Post-translationally, proteolytic processing by trypsin removes an inhibitory N-terminal propeptide and is essential for peptidoglycan binding and antibacterial activity. In terms of tissue distribution, expressed by keratinocytes. Highly expressed in epidermal keratinocytes of psoriasis patients (at protein level). Constitutively expressed in intestine. Low expression is found in healthy pancreas. Overexpressed during the acute phase of pancreatitis and in some patients with chronic pancreatitis.

Its subcellular location is the secreted. Lipopolysaccharide inhibits pore-forming activity, explaining why is bactericidal for Gram-positive but not Gram-negative bacteria. Bactericidal C-type lectin which acts exclusively against Gram-positive bacteria and mediates bacterial killing by binding to surface-exposed carbohydrate moieties of peptidoglycan. Binds membrane phospholipids and kills bacteria by forming a hexameric membrane-permeabilizing oligomeric pore. Functionally, acts as a hormone in response to different stimuli like anti-inflammatory signals, such as IL17A, or gut microbiome. Secreted by different cell types to activate its receptor EXTL3 and induce cell specific signaling pathways. Induced by IL17A in keratinocytes, regulates keratinocyte proliferation and differentiation after skin injury via activation of EXTL3-PI3K-AKT signaling pathway. In parallel, inhibits skin inflammation through the inhibition of inflammatory cytokines such as IL6 and TNF. In pancreas, is able to permealize beta-cells membrane and stimulate their proliferation. Its function is as follows. Has bacteriostatic activity. The chain is Regenerating islet-derived protein 3-alpha from Homo sapiens (Human).